A 101-amino-acid chain; its full sequence is NADH-quinone oxidoreductase subunit K (101 aa).

3 consecutive transmembrane segments (helical) span residues 4–24, 30–50, and 61–81; these read LAHY…GIFL, IIIL…FVAF, and IFVF…LAIL.

This sequence belongs to the complex I subunit 4L family. In terms of assembly, NDH-1 is composed of 14 different subunits. Subunits NuoA, H, J, K, L, M, N constitute the membrane sector of the complex.

The protein resides in the cell inner membrane. It carries out the reaction a quinone + NADH + 5 H(+)(in) = a quinol + NAD(+) + 4 H(+)(out). Functionally, NDH-1 shuttles electrons from NADH, via FMN and iron-sulfur (Fe-S) centers, to quinones in the respiratory chain. The immediate electron acceptor for the enzyme in this species is believed to be ubiquinone. Couples the redox reaction to proton translocation (for every two electrons transferred, four hydrogen ions are translocated across the cytoplasmic membrane), and thus conserves the redox energy in a proton gradient. The polypeptide is NADH-quinone oxidoreductase subunit K (Burkholderia cenocepacia (strain HI2424)).